The following is a 358-amino-acid chain: Mannonate dehydratase (358 aa).

It belongs to the mannonate dehydratase family. Fe(2+) serves as cofactor. It depends on Mn(2+) as a cofactor.

It carries out the reaction D-mannonate = 2-dehydro-3-deoxy-D-gluconate + H2O. The protein operates within carbohydrate metabolism; pentose and glucuronate interconversion. Its function is as follows. Catalyzes the dehydration of D-mannonate. This chain is Mannonate dehydratase, found in Lactococcus lactis subsp. cremoris (strain MG1363).